Consider the following 190-residue polypeptide: 7-methyl-GTP pyrophosphatase (190 aa).

The Proton acceptor role is filled by D69.

The protein belongs to the Maf family. YceF subfamily. A divalent metal cation is required as a cofactor.

The protein localises to the cytoplasm. The catalysed reaction is N(7)-methyl-GTP + H2O = N(7)-methyl-GMP + diphosphate + H(+). In terms of biological role, nucleoside triphosphate pyrophosphatase that hydrolyzes 7-methyl-GTP (m(7)GTP). May have a dual role in cell division arrest and in preventing the incorporation of modified nucleotides into cellular nucleic acids. The sequence is that of 7-methyl-GTP pyrophosphatase from Xanthomonas axonopodis pv. citri (strain 306).